The primary structure comprises 203 residues: Sec-independent protein translocase protein TatB (203 aa).

The chain crosses the membrane as a helical span at residues M1–G21. The segment at K179 to A203 is disordered.

It belongs to the TatB family. As to quaternary structure, the Tat system comprises two distinct complexes: a TatABC complex, containing multiple copies of TatA, TatB and TatC subunits, and a separate TatA complex, containing only TatA subunits. Substrates initially bind to the TatABC complex, which probably triggers association of the separate TatA complex to form the active translocon.

The protein resides in the cell inner membrane. Its function is as follows. Part of the twin-arginine translocation (Tat) system that transports large folded proteins containing a characteristic twin-arginine motif in their signal peptide across membranes. Together with TatC, TatB is part of a receptor directly interacting with Tat signal peptides. TatB may form an oligomeric binding site that transiently accommodates folded Tat precursor proteins before their translocation. The sequence is that of Sec-independent protein translocase protein TatB from Rhizobium johnstonii (strain DSM 114642 / LMG 32736 / 3841) (Rhizobium leguminosarum bv. viciae).